A 303-amino-acid chain; its full sequence is T-box protein 38 (303 aa).

The segment at residues L14–S195 is a DNA-binding region (T-box). Residues F193–S225 are disordered. Residues D204–P213 show a composition bias toward low complexity.

It is found in the nucleus. Functionally, transcription factor. Required for mesodermal induction, acting redundantly with transcription factor tbx-37. Together with tbx-37, acts by inducing cell fates in the AB lineage, thereby playing a role in development of the anterior pharynx. The polypeptide is T-box protein 38 (tbx-38) (Caenorhabditis elegans).